We begin with the raw amino-acid sequence, 3127 residues long: Probable polyketide synthase 33 (3127 aa).

Residues serine 24 to glutamate 457 form the Ketosynthase family 3 (KS3) domain. Catalysis depends on for beta-ketoacyl synthase activity residues cysteine 196, histidine 335, and histidine 380. Positions glycine 660–tyrosine 693 are acyl/malonyl transferase. Serine 670 acts as the For acyl/malonyl transferase activity in catalysis. The interval glycine 958 to isoleucine 1080 is N-terminal hotdog fold. The PKS/mFAS DH domain occupies glycine 958–serine 1257. Histidine 992 functions as the Proton acceptor; for dehydratase activity in the catalytic mechanism. Residues asparagine 1096–serine 1257 are C-terminal hotdog fold. Aspartate 1168 functions as the Proton donor; for dehydratase activity in the catalytic mechanism. A disordered region spans residues serine 1369–tyrosine 1394. The segment covering asparagine 1370–tyrosine 1394 has biased composition (low complexity). In terms of domain architecture, Carrier spans serine 2539–histidine 2616. O-(pantetheine 4'-phosphoryl)serine is present on serine 2576. A disordered region spans residues asparagine 2617 to asparagine 2659. A coiled-coil region spans residues asparagine 2617–phenylalanine 2671. Residues valine 2937–phenylalanine 2957 form a helical membrane-spanning segment.

Pantetheine 4'-phosphate is required as a cofactor.

The protein localises to the membrane. Functionally, probable polyketide synthase. The polypeptide is Probable polyketide synthase 33 (pks33) (Dictyostelium discoideum (Social amoeba)).